We begin with the raw amino-acid sequence, 88 residues long: Small ribosomal subunit protein uS17 (88 aa).

The protein belongs to the universal ribosomal protein uS17 family. In terms of assembly, part of the 30S ribosomal subunit.

Its function is as follows. One of the primary rRNA binding proteins, it binds specifically to the 5'-end of 16S ribosomal RNA. The chain is Small ribosomal subunit protein uS17 from Lawsonia intracellularis (strain PHE/MN1-00).